We begin with the raw amino-acid sequence, 210 residues long: Probable sporulation protein YtaF (210 aa).

Transmembrane regions (helical) follow at residues I6–L26, I36–F56, L69–A89, V129–A149, V162–F184, and W190–L210.

The protein localises to the cell membrane. This chain is Probable sporulation protein YtaF (ytaF), found in Bacillus subtilis (strain 168).